Reading from the N-terminus, the 1597-residue chain is Mitogen-activated protein kinase kinase kinase 4 (1597 aa).

2 disordered regions span residues 1–128 (MRDA…VETV) and 424–465 (SPRP…PRVP). Residues 59–69 (SDPEDFSDETN) are compositionally biased toward acidic residues. Phosphoserine is present on Ser77. Residues 84-94 (QMKRLSAKHQR) show a composition bias toward basic residues. At Ser424 the chain carries Phosphoserine. Residue Thr440 is modified to Phosphothreonine. At Ser449 the chain carries Phosphoserine. Acidic residues predominate over residues 449–458 (SGTEESDEEP). Thr451 bears the Phosphothreonine mark. Residues Ser454 and Ser492 each carry the phosphoserine modification. Disordered stretches follow at residues 1137–1157 (RPVK…IIPT), 1190–1220 (AAGR…SVPE), and 1233–1263 (FRSL…TRRS). The span at 1210 to 1219 (APDTRGSSVP) shows a compositional bias: polar residues. Residues Ser1241 and Ser1263 each carry the phosphoserine modification. Residues 1241-1250 (SPTEERDEPA) are compositionally biased toward basic and acidic residues. One can recognise a Protein kinase domain in the interval 1332–1590 (WQRGNKIGEG…ASQLLDHAFV (259 aa)). ATP is bound by residues 1338-1346 (IGEGQYGKV) and Lys1361. Asp1452 serves as the catalytic Proton acceptor.

It belongs to the protein kinase superfamily. STE Ser/Thr protein kinase family. MAP kinase kinase kinase subfamily. As to quaternary structure, monomer and homodimer. Homodimerization enhances kinase activity. Interacts with CDC42. Interacts with TRAF4; this promotes homodimerization. Binds both upstream activators and downstream substrates in multimolecular complexes. Interacts with AXIN1 and DIXDC1; interaction with DIXDC1 prevents interaction with AXIN1. Interacts with GADD45 and MAP2K6. Interacts with ZFP36; this interaction enhances the association with SH3KBP1/CIN85. Interacts with SH3KBP1; this interaction enhances the association with ZFP36. Mg(2+) serves as cofactor. As to expression, widely expressed. High expression was found in skeletal muscle, kidney, testis followed by heart brain and lung. Low expression was found in spleen.

It is found in the cytoplasm. It localises to the perinuclear region. It catalyses the reaction L-seryl-[protein] + ATP = O-phospho-L-seryl-[protein] + ADP + H(+). It carries out the reaction L-threonyl-[protein] + ATP = O-phospho-L-threonyl-[protein] + ADP + H(+). Its activity is regulated as follows. N-terminal autoinhibitory domain interacts with the C-terminal kinase domain, inhibiting kinase activity, and preventing interaction with its substrate, MAP2K6. The GADD45 proteins activate the kinase by binding to the N-terminal domain. Activated by phosphorylation on Thr-1494. In terms of biological role, component of a protein kinase signal transduction cascade. Activates the CSBP2, P38 and JNK MAPK pathways, but not the ERK pathway. Specifically phosphorylates and activates MAP2K4 and MAP2K6. The sequence is that of Mitogen-activated protein kinase kinase kinase 4 (Map3k4) from Mus musculus (Mouse).